A 283-amino-acid chain; its full sequence is Bifunctional protein FolD (283 aa).

Residues 165–167 (GAS) and serine 190 each bind NADP(+).

Belongs to the tetrahydrofolate dehydrogenase/cyclohydrolase family. Homodimer.

The enzyme catalyses (6R)-5,10-methylene-5,6,7,8-tetrahydrofolate + NADP(+) = (6R)-5,10-methenyltetrahydrofolate + NADPH. It carries out the reaction (6R)-5,10-methenyltetrahydrofolate + H2O = (6R)-10-formyltetrahydrofolate + H(+). Its pathway is one-carbon metabolism; tetrahydrofolate interconversion. In terms of biological role, catalyzes the oxidation of 5,10-methylenetetrahydrofolate to 5,10-methenyltetrahydrofolate and then the hydrolysis of 5,10-methenyltetrahydrofolate to 10-formyltetrahydrofolate. The polypeptide is Bifunctional protein FolD (Cupriavidus necator (strain ATCC 17699 / DSM 428 / KCTC 22496 / NCIMB 10442 / H16 / Stanier 337) (Ralstonia eutropha)).